Reading from the N-terminus, the 421-residue chain is 26S proteasome non-ATPase regulatory subunit 11A (421 aa).

Residues 227-391 (AYSYFYEAFE…GVLIVFDEPP (165 aa)) enclose the PCI domain.

Belongs to the proteasome subunit S9 family. Component of the lid subcomplex of the 19S proteasome regulatory particle complex (also named PA700 complex). The 26S proteasome consists of a 20S proteasome core and two 19S regulatory subunits.

Its subcellular location is the nucleus. It is found in the cytoplasm. It localises to the cytosol. In terms of biological role, component of the lid subcomplex of the 26S proteasome, a multiprotein complex involved in the ATP-dependent degradation of ubiquitinated proteins. In the complex, psmd11a is required for proteasome assembly. In Danio rerio (Zebrafish), this protein is 26S proteasome non-ATPase regulatory subunit 11A (psmd11a).